The following is a 434-amino-acid chain: MPMQIMLSTQVADEAWGKNALLSFHQAQATIHVTDYSARNTVQKAARKLRGQGIKDVVLAGENWDLETCWAFYQGFYSAKQDYAVEFPTLDDAPQAELLARIQCGDFVREMINLPAEVITPVELARRAAHFIEEQAEEYGDKSAVSFNIISGEELKAQNYQGIWNVGRGSANPPAMLQLDFNPTGNPDAPVLACLVGKGITFDSGGYSIKPSDNMSTMRTDMGGAALLTGSLGLAIARGLTQRVKLYLCCAENLVSSNAFKLGDIITYSNGVTAEILNTDAEGRLVLADGLIEADKQQPKMIIDCATLTGAAKMAVGNDYHSVLSMDDALVAALFKSAETEQEPFWRLPFAELHRSQISTAFADIANTGTVPVGAGASTATAFLSYFVKNYQQHWLHIDCSATYRKTASDLWAVGATGIGVQTLANLLLNPVKG.

Residues Lys198 and Asp203 each contribute to the Mn(2+) site. Residue Lys210 is part of the active site. The Mn(2+) site is built by Asp221, Asp280, and Glu282. Arg284 is an active-site residue.

The protein belongs to the peptidase M17 family. In terms of assembly, homohexamer. The cofactor is Mn(2+).

Its subcellular location is the cytoplasm. The catalysed reaction is Release of an N-terminal amino acid, Xaa, from a peptide or arylamide. Xaa is preferably Glu or Asp but may be other amino acids, including Leu, Met, His, Cys and Gln.. Probably plays an important role in intracellular peptide degradation. The sequence is that of Peptidase B from Pasteurella multocida (strain Pm70).